The sequence spans 491 residues: NADH-ubiquinone oxidoreductase chain 2 (491 aa).

The next 14 helical transmembrane spans lie at 11 to 31 (MIKY…SISI), 38 to 58 (VHII…VIGI), 74 to 94 (ELIK…IKMF), 106 to 126 (ITDE…ISME), 129 to 149 (NLIT…ILAL), 161 to 181 (LKYY…IVSI), 210 to 230 (IALI…HGWL), 238 to 258 (GMLM…MVLI), 270 to 290 (AIMF…VGTI), 298 to 318 (LIRF…LMLA), 330 to 350 (VYYL…IMGF), 375 to 395 (GAIV…MTNF), 411 to 433 (VYLT…NLVK), and 463 to 483 (IVLG…ILNV).

This sequence belongs to the complex I subunit 2 family.

The protein localises to the mitochondrion inner membrane. The catalysed reaction is a ubiquinone + NADH + 5 H(+)(in) = a ubiquinol + NAD(+) + 4 H(+)(out). In terms of biological role, core subunit of the mitochondrial membrane respiratory chain NADH dehydrogenase (Complex I) that is believed to belong to the minimal assembly required for catalysis. Complex I functions in the transfer of electrons from NADH to the respiratory chain. The immediate electron acceptor for the enzyme is believed to be ubiquinone. This Dictyostelium citrinum (Slime mold) protein is NADH-ubiquinone oxidoreductase chain 2 (nad2).